Here is a 142-residue protein sequence, read N- to C-terminus: Glia maturation factor gamma (142 aa).

The residue at position 2 (S2) is an N-acetylserine. The ADF-H domain maps to 4–139; sequence SLVVCDVDPE…NETWLKEKLA (136 aa).

The protein belongs to the actin-binding proteins ADF family. GMF subfamily. Expressed in rat thymus, testis, and spleen. Is present predominantly in proliferative and differentiative organs.

The polypeptide is Glia maturation factor gamma (Gmfg) (Rattus norvegicus (Rat)).